The chain runs to 149 residues: Calmodulin (149 aa).

The residue at position 2 (alanine 2) is an N-acetylalanine. EF-hand domains lie at 8–43 (EQIS…LGQN), 44–79 (PTEA…KMRD), 81–116 (DSEE…LGEK), and 117–149 (LTDN…MLSK). Ca(2+) contacts are provided by aspartate 21, aspartate 23, aspartate 25, threonine 27, glutamate 32, aspartate 57, aspartate 59, asparagine 61, threonine 63, glutamate 68, aspartate 94, aspartate 96, asparagine 98, tyrosine 100, glutamate 105, aspartate 130, aspartate 132, aspartate 134, glutamine 136, and glutamate 141.

This sequence belongs to the calmodulin family. Post-translationally, trimethylation of Lys-116 observed in other calmodulins is absent here.

Its function is as follows. Calmodulin mediates the control of a large number of enzymes, ion channels and other proteins by Ca(2+). Among the enzymes to be stimulated by the calmodulin-Ca(2+) complex are a number of protein kinases and phosphatases. The sequence is that of Calmodulin (CMD1) from Pleurotus cornucopiae (Cornucopia mushroom).